We begin with the raw amino-acid sequence, 669 residues long: DNA mismatch repair protein MutL (669 aa).

The segment at 356-377 (FEQRQNTENNQEKTFSSEESNS) is disordered. The span at 361–377 (NTENNQEKTFSSEESNS) shows a compositional bias: polar residues.

The protein belongs to the DNA mismatch repair MutL/HexB family.

Its function is as follows. This protein is involved in the repair of mismatches in DNA. It is required for dam-dependent methyl-directed DNA mismatch repair. May act as a 'molecular matchmaker', a protein that promotes the formation of a stable complex between two or more DNA-binding proteins in an ATP-dependent manner without itself being part of a final effector complex. The polypeptide is DNA mismatch repair protein MutL (Staphylococcus aureus (strain MSSA476)).